A 509-amino-acid polypeptide reads, in one-letter code: DAP3-binding cell death enhancer 1 (509 aa).

Residues 1–23 (MWRLTGILGRALPRLLGPGFRGI) constitute a mitochondrion transit peptide. Disordered regions lie at residues 19-60 (GFRG…RNRD) and 143-185 (VLPS…PGLL). A propeptide spans 24–101 (TPKPTSSDGP…AVLALHLARQ (78 aa)) (extended MTS). The span at 26 to 40 (KPTSSDGPQTTSTTL) shows a compositional bias: polar residues. Composition is skewed to basic and acidic residues over residues 46 to 60 (NFDRSGSHGSKRNRD) and 156 to 168 (GLREPRLGQEEPA). TPR repeat units lie at residues 213–245 (AGPPGGKNEQDKPKALPLEEAVTSIQQLFQLSV), 246–278 (AIAFNFLGTENIKTGDYTAAFSYFQKAADRGYS), 279–313 (KAQYNVGLCLEHGRGTPRDLSKAVLFYHLAAVQGH), 314–351 (SLAQYRYARCLLQSPGSMSDPERQRAVSLLKQAADSGL), 352–385 (TEAQAFLGVLFTKEPHLDEQKAVKYFWLAASNGD), 386–423 (SQSRFHLGICYEKGLGVQRNLGEAVKCYQKSAAMGNEP), and 470–498 (ASSTGNLGLLCRSGHLGTSHGAPSRAMPS). The SIFI-degron signature appears at 307–326 (LAAVQGHSLAQYRYARCLLQ).

The protein belongs to the DELE1 family. As to quaternary structure, interacts with DAP3. Interacts (via TPR repeats) with EIF2AK1/HRI; activating the protein kinase activity of EIF2AK1/HRI, thereby promoting the integrated stress response (ISR). In terms of assembly, homooctamer; oligomerization is required to activate EIF2AK1/HRI. Interacts (via TPR repeats) with EIF2AK1/HRI; activating the protein kinase activity of EIF2AK1/HRI, thereby promoting the integrated stress response (ISR). Unstable protein in absence of stress: imported in the mitochondrial matrix following processing by the mitochondrial-processing peptidase (MPP), where it is degraded by LONP1. Stabilized in response to iron deficiency: iron deficiency impairs mitochondrial import, promoting localization at the mitochondrial surface and stabilization. Cleaved by OMA1 in response to mitochondrial stress, generating the DAP3-binding cell death enhancer 1 short form (DELE1(S) or S-DELE1) that accumulates in the cytosol and activates the protein kinase activity of EIF2AK1/HRI. Protein cleavage by OMA1 can take place at different positions, and apparently does not require a specific sequence motif. Post-translationally, ubiquitinated and degraded by the SIFI complex once the mitochondrial stress has been resolved, thereby providing stress response silencing. Within the SIFI complex, UBR4 initiates ubiquitin chain that are further elongated or branched by KCMF1.

The protein localises to the mitochondrion. Its subcellular location is the mitochondrion outer membrane. It localises to the mitochondrion inner membrane. The protein resides in the cytoplasm. It is found in the cytosol. Functionally, protein kinase activator that acts as a key activator of the integrated stress response (ISR) following various stresses, such as iron deficiency, mitochondrial stress or mitochondrial DNA breaks. Detects impaired protein import and processing in mitochondria, activating the ISR. May also required for the induction of death receptor-mediated apoptosis through the regulation of caspase activation. Protein kinase activator that activates the ISR in response to iron deficiency: iron deficiency impairs mitochondrial import, promoting DELE1 localization at the mitochondrial surface, where it binds and activates EIF2AK1/HRI to trigger the ISR. Its function is as follows. Protein kinase activator generated by protein cleavage in response to mitochondrial stress, which accumulates in the cytosol and specifically binds to and activates the protein kinase activity of EIF2AK1/HRI. It thereby activates the integrated stress response (ISR): EIF2AK1/HRI activation promotes eIF-2-alpha (EIF2S1) phosphorylation, leading to a decrease in global protein synthesis and the induction of selected genes, including the transcription factor ATF4, the master transcriptional regulator of the ISR. Also acts as an activator of PRKN-independent mitophagy: activates the protein kinase activity of EIF2AK1/HRI in response to mitochondrial damage, promoting eIF-2-alpha (EIF2S1) phosphorylation, leading to mitochondrial localization of EIF2S1 followed by induction of mitophagy. This chain is DAP3-binding cell death enhancer 1, found in Rattus norvegicus (Rat).